Consider the following 87-residue polypeptide: UPF0250 protein SG0794 (87 aa).

The protein belongs to the UPF0250 family.

This chain is UPF0250 protein SG0794, found in Sodalis glossinidius (strain morsitans).